We begin with the raw amino-acid sequence, 219 residues long: Leucyl/phenylalanyl-tRNA--protein transferase (219 aa).

The protein belongs to the L/F-transferase family.

It is found in the cytoplasm. The enzyme catalyses N-terminal L-lysyl-[protein] + L-leucyl-tRNA(Leu) = N-terminal L-leucyl-L-lysyl-[protein] + tRNA(Leu) + H(+). It catalyses the reaction N-terminal L-arginyl-[protein] + L-leucyl-tRNA(Leu) = N-terminal L-leucyl-L-arginyl-[protein] + tRNA(Leu) + H(+). The catalysed reaction is L-phenylalanyl-tRNA(Phe) + an N-terminal L-alpha-aminoacyl-[protein] = an N-terminal L-phenylalanyl-L-alpha-aminoacyl-[protein] + tRNA(Phe). Its function is as follows. Functions in the N-end rule pathway of protein degradation where it conjugates Leu, Phe and, less efficiently, Met from aminoacyl-tRNAs to the N-termini of proteins containing an N-terminal arginine or lysine. The sequence is that of Leucyl/phenylalanyl-tRNA--protein transferase from Leptospira interrogans serogroup Icterohaemorrhagiae serovar copenhageni (strain Fiocruz L1-130).